The primary structure comprises 116 residues: Non-specific lipid-transfer protein 5 (116 aa).

Residues 1–24 (MARSMKLACVVLVMCMIVAPMAEG) form the signal peptide. 4 cysteine pairs are disulfide-bonded: C28–C75, C38–C52, C53–C98, and C73–C112.

Belongs to the plant LTP family.

In terms of biological role, plant non-specific lipid-transfer proteins transfer phospholipids as well as galactolipids across membranes. May play a role in wax or cutin deposition in the cell walls of expanding epidermal cells and certain secretory tissues. The chain is Non-specific lipid-transfer protein 5 from Lens culinaris (Lentil).